The primary structure comprises 173 residues: Nucleoside-triphosphatase THEP1 (173 aa).

ATP-binding positions include 15–22 and 101–108; these read GMPGVGKT and LKIIDEIG.

The protein belongs to the THEP1 NTPase family.

The catalysed reaction is a ribonucleoside 5'-triphosphate + H2O = a ribonucleoside 5'-diphosphate + phosphate + H(+). Functionally, has nucleotide phosphatase activity towards ATP, GTP, CTP, TTP and UTP. May hydrolyze nucleoside diphosphates with lower efficiency. This chain is Nucleoside-triphosphatase THEP1, found in Pyrobaculum aerophilum (strain ATCC 51768 / DSM 7523 / JCM 9630 / CIP 104966 / NBRC 100827 / IM2).